The primary structure comprises 290 residues: Undecaprenyl-diphosphatase 2 (290 aa).

A run of 6 helical transmembrane segments spans residues 104–124, 128–148, 174–194, 205–225, 237–257, and 268–288; these read WMVIVGTLPVAVLGYLGKDLI, LRNLWITATMLVLFSFVFILA, CLALIPGVSRSGGTVSAGLFL, SFLLAIPAVLASGLFSLPDAF, QLFVGTAIAFAVGYASIAWLL, and FALWRIPLGLAVMGLLAFGVL.

Belongs to the UppP family.

It localises to the cell membrane. It catalyses the reaction di-trans,octa-cis-undecaprenyl diphosphate + H2O = di-trans,octa-cis-undecaprenyl phosphate + phosphate + H(+). Catalyzes the dephosphorylation of undecaprenyl diphosphate (UPP). Confers resistance to bacitracin. This Corynebacterium jeikeium (strain K411) protein is Undecaprenyl-diphosphatase 2.